Reading from the N-terminus, the 366-residue chain is UDP-N-acetylglucosamine--N-acetylmuramyl-(pentapeptide) pyrophosphoryl-undecaprenol N-acetylglucosamine transferase (366 aa).

Residues 22 to 24 (TGG), N134, R170, S198, I253, and Q298 each bind UDP-N-acetyl-alpha-D-glucosamine.

This sequence belongs to the glycosyltransferase 28 family. MurG subfamily.

The protein resides in the cell inner membrane. The enzyme catalyses di-trans,octa-cis-undecaprenyl diphospho-N-acetyl-alpha-D-muramoyl-L-alanyl-D-glutamyl-meso-2,6-diaminopimeloyl-D-alanyl-D-alanine + UDP-N-acetyl-alpha-D-glucosamine = di-trans,octa-cis-undecaprenyl diphospho-[N-acetyl-alpha-D-glucosaminyl-(1-&gt;4)]-N-acetyl-alpha-D-muramoyl-L-alanyl-D-glutamyl-meso-2,6-diaminopimeloyl-D-alanyl-D-alanine + UDP + H(+). The protein operates within cell wall biogenesis; peptidoglycan biosynthesis. Cell wall formation. Catalyzes the transfer of a GlcNAc subunit on undecaprenyl-pyrophosphoryl-MurNAc-pentapeptide (lipid intermediate I) to form undecaprenyl-pyrophosphoryl-MurNAc-(pentapeptide)GlcNAc (lipid intermediate II). This is UDP-N-acetylglucosamine--N-acetylmuramyl-(pentapeptide) pyrophosphoryl-undecaprenol N-acetylglucosamine transferase from Xylella fastidiosa (strain M12).